A 225-amino-acid polypeptide reads, in one-letter code: Late embryogenesis abundant protein 29 (225 aa).

Disordered stretches follow at residues 1–167 and 193–225; these read MASN…GGFL and TEEE…YQRK. 4 stretches are compositionally biased toward basic and acidic residues: residues 28 to 39, 49 to 61, 71 to 83, and 93 to 119; these read MRDKAEEGRDKT, KAHE…KDKT, KAHE…KEKT, and KAHE…KDKA. LEA 11-mer repeat repeat units follow at residues 53-63, 75-85, and 97-107; these read TAQSAKDKTSQ, TAQSAKEKTSQ, and TTQAAKEKTSQ. The span at 141–153 shows a compositional bias: polar residues; it reads TKETAQGAAQYTK. Positions 154 to 163 are enriched in basic and acidic residues; the sequence is ETAEAGRDKT. Residues 205–225 show a composition bias toward low complexity; that stretch reads TTTTTATTRTTDPTHQTYQRK.

Belongs to the LEA type 4 family.

It is found in the cytoplasm. The protein localises to the cytosol. Involved dehydration tolerance. In Arabidopsis thaliana (Mouse-ear cress), this protein is Late embryogenesis abundant protein 29.